Consider the following 395-residue polypeptide: Protein phosphatase PP2A regulatory subunit A (395 aa).

HEAT repeat units lie at residues 44–81 (DCLA…AVGP), 83–120 (STKT…ILSP), 122–159 (LAIQ…VLGK), 161–198 (ATIE…VIGI), 200–237 (LLSQ…QLGV), 239–276 (FFDD…EEFG), 279–316 (WAMQ…VLGS), and 318–355 (ITST…IVDE).

This sequence belongs to the phosphatase 2A regulatory subunit A family. PP2A exists in several trimeric forms, all of which consist of a core composed of a catalytic subunit associated with a 65 kDa regulatory subunit (PR65) (subunit A). The core complex associates with a third, variable subunit (subunit B), which confers distinct properties to the holoenzyme.

In terms of biological role, the PR65 subunit of protein phosphatase 2A serves as a scaffolding molecule to coordinate the assembly of the catalytic subunit and a variable regulatory B subunit. This chain is Protein phosphatase PP2A regulatory subunit A, found in Pisum sativum (Garden pea).